Consider the following 191-residue polypeptide: MLLLIDNYDSFTYNLYQYFCELGAEVVVKRNDELQLTDIERLAPQHLVISPGPCTPNEAGISVAAIRHFAGKLPILGVCLGHQALGQAFGAEVVRARAVMHGKTSAIRHLGVGVFRGLSDPLTVTRYHSLVLKADTLPDCFEVTAWSERDGVRDEIMGIRHRALALEGVQFHPESVLSEQGHQLLDNFLNR.

In terms of domain architecture, Glutamine amidotransferase type-1 spans 1–191 (MLLLIDNYDS…HQLLDNFLNR (191 aa)). Active-site residues include Cys79, His172, and Glu174.

Monomer. Heterodimer consisting of two non-identical subunits: a glutamine amidotransferase subunit (PabA) and a aminodeoxychorismate synthase subunit (PabB).

It catalyses the reaction chorismate + L-glutamine = 4-amino-4-deoxychorismate + L-glutamate. The protein operates within cofactor biosynthesis; tetrahydrofolate biosynthesis; 4-aminobenzoate from chorismate: step 1/2. Part of a heterodimeric complex that catalyzes the two-step biosynthesis of 4-amino-4-deoxychorismate (ADC), a precursor of p-aminobenzoate (PABA) and tetrahydrofolate. In the first step, a glutamine amidotransferase (PabA) generates ammonia as a substrate that, along with chorismate, is used in the second step, catalyzed by aminodeoxychorismate synthase (PabB) to produce ADC. PabA converts glutamine into glutamate only in the presence of stoichiometric amounts of PabB. This chain is Aminodeoxychorismate synthase component 2 (pabA), found in Serratia marcescens.